Reading from the N-terminus, the 106-residue chain is uncharacterized protein (106 aa).

Disordered stretches follow at residues 27–47 (FSDS…DVSD) and 83–106 (SPAM…VQSK). Positions 29–39 (DSEDEPDDEAS) are enriched in acidic residues. Positions 94-106 (GIEREDRGGVQSK) are enriched in basic and acidic residues.

It localises to the mitochondrion. This is an uncharacterized protein from Arabidopsis thaliana (Mouse-ear cress).